Consider the following 526-residue polypeptide: L-aspartate oxidase (526 aa).

FAD contacts are provided by residues 17–20 (TGVA), Lys-40, 49–56 (ATHYAQGG), and Asp-213. The active-site Proton donor/acceptor is Arg-284. FAD is bound by residues Glu-367 and 383 to 384 (SL).

The protein belongs to the FAD-dependent oxidoreductase 2 family. NadB subfamily. It depends on FAD as a cofactor.

The protein localises to the cytoplasm. It carries out the reaction L-aspartate + O2 = iminosuccinate + H2O2. The protein operates within cofactor biosynthesis; NAD(+) biosynthesis; iminoaspartate from L-aspartate (oxidase route): step 1/1. Its function is as follows. Catalyzes the oxidation of L-aspartate to iminoaspartate, the first step in the de novo biosynthesis of NAD(+). In Mycobacterium leprae (strain TN), this protein is L-aspartate oxidase (nadB).